A 970-amino-acid polypeptide reads, in one-letter code: Protein translocase subunit SecA (970 aa).

Residues glutamine 99, 117 to 121, and aspartate 631 each bind ATP; that span reads GEGKT.

Belongs to the SecA family. Monomer and homodimer. Part of the essential Sec protein translocation apparatus which comprises SecA, SecYEG and auxiliary proteins SecDF. Other proteins may also be involved.

It is found in the cell inner membrane. The protein resides in the cytoplasm. It catalyses the reaction ATP + H2O + cellular proteinSide 1 = ADP + phosphate + cellular proteinSide 2.. Functionally, part of the Sec protein translocase complex. Interacts with the SecYEG preprotein conducting channel. Has a central role in coupling the hydrolysis of ATP to the transfer of proteins into and across the cell membrane, serving as an ATP-driven molecular motor driving the stepwise translocation of polypeptide chains across the membrane. The polypeptide is Protein translocase subunit SecA (Chlamydia caviae (strain ATCC VR-813 / DSM 19441 / 03DC25 / GPIC) (Chlamydophila caviae)).